We begin with the raw amino-acid sequence, 142 residues long: Hemoglobin subunit alpha-2 (142 aa).

Positions valine 2–arginine 142 constitute a Globin domain. O2 is bound at residue histidine 59. Histidine 88 contributes to the heme b binding site.

This sequence belongs to the globin family. Heterotetramer of two alpha chains and two beta chains. Red blood cells.

In terms of biological role, involved in oxygen transport from the lung to the various peripheral tissues. The sequence is that of Hemoglobin subunit alpha-2 from Bubalus bubalis (Domestic water buffalo).